Reading from the N-terminus, the 232-residue chain is Octanoyltransferase (232 aa).

Residues 43–231 (DQTPNYFLFV…HFTQLFDCTV (189 aa)) enclose the BPL/LPL catalytic domain. Residues 88-95 (RGGDITYH), 160-162 (ALG), and 173-175 (GFA) contribute to the substrate site. Cys-191 acts as the Acyl-thioester intermediate in catalysis.

Belongs to the LipB family.

It localises to the cytoplasm. The catalysed reaction is octanoyl-[ACP] + L-lysyl-[protein] = N(6)-octanoyl-L-lysyl-[protein] + holo-[ACP] + H(+). Its pathway is protein modification; protein lipoylation via endogenous pathway; protein N(6)-(lipoyl)lysine from octanoyl-[acyl-carrier-protein]: step 1/2. Functionally, catalyzes the transfer of endogenously produced octanoic acid from octanoyl-acyl-carrier-protein onto the lipoyl domains of lipoate-dependent enzymes. Lipoyl-ACP can also act as a substrate although octanoyl-ACP is likely to be the physiological substrate. This Flavobacterium psychrophilum (strain ATCC 49511 / DSM 21280 / CIP 103535 / JIP02/86) protein is Octanoyltransferase.